The following is a 290-amino-acid chain: UPF0761 membrane protein YihY (290 aa).

6 helical membrane passes run 44 to 64 (LLSLVPLIAVVFALFAAFPMF), 104 to 124 (VGACGLIVTALLLMYAIDSAL), 140 to 160 (FAVYWMILTLGPLLAGASLAI), 183 to 203 (VLPLLLSWISFWLLYSIVPTT), 210 to 230 (AIVGAFVAALLFEAGKKGFAL), and 244 to 264 (VLAVIPILFVWVYWTWCIVLL).

It belongs to the UPF0761 family.

Its subcellular location is the cell inner membrane. The protein is UPF0761 membrane protein YihY of Salmonella arizonae (strain ATCC BAA-731 / CDC346-86 / RSK2980).